The primary structure comprises 173 residues: Shikimate kinase (173 aa).

Position 14–19 (14–19) interacts with ATP; the sequence is GAGKST. Ser18 is a Mg(2+) binding site. Residues Asp36, Arg60, and Gly82 each contribute to the substrate site. Arg120 provides a ligand contact to ATP. A substrate-binding site is contributed by Arg139. Gln156 contributes to the ATP binding site.

This sequence belongs to the shikimate kinase family. Monomer. It depends on Mg(2+) as a cofactor.

It is found in the cytoplasm. The catalysed reaction is shikimate + ATP = 3-phosphoshikimate + ADP + H(+). It participates in metabolic intermediate biosynthesis; chorismate biosynthesis; chorismate from D-erythrose 4-phosphate and phosphoenolpyruvate: step 5/7. Catalyzes the specific phosphorylation of the 3-hydroxyl group of shikimic acid using ATP as a cosubstrate. In Actinobacillus pleuropneumoniae serotype 5b (strain L20), this protein is Shikimate kinase.